The primary structure comprises 142 residues: ATP synthase epsilon chain (142 aa).

The protein belongs to the ATPase epsilon chain family. F-type ATPases have 2 components, CF(1) - the catalytic core - and CF(0) - the membrane proton channel. CF(1) has five subunits: alpha(3), beta(3), gamma(1), delta(1), epsilon(1). CF(0) has three main subunits: a, b and c.

The protein resides in the cell inner membrane. Functionally, produces ATP from ADP in the presence of a proton gradient across the membrane. In Histophilus somni (strain 129Pt) (Haemophilus somnus), this protein is ATP synthase epsilon chain.